Reading from the N-terminus, the 102-residue chain is Small ribosomal subunit protein uS10 (102 aa).

Belongs to the universal ribosomal protein uS10 family. In terms of assembly, part of the 30S ribosomal subunit.

Its function is as follows. Involved in the binding of tRNA to the ribosomes. In Pseudothermotoga lettingae (strain ATCC BAA-301 / DSM 14385 / NBRC 107922 / TMO) (Thermotoga lettingae), this protein is Small ribosomal subunit protein uS10.